Consider the following 525-residue polypeptide: Putative ribose/galactose/methyl galactoside import ATP-binding protein (525 aa).

A disordered region spans residues 1–30 (MFGSATANPPAQRDLPSSDSDSPTPDAQPP). Residues 14–25 (DLPSSDSDSPTP) show a composition bias toward low complexity. 2 ABC transporter domains span residues 33 to 269 (LEIS…VGRE) and 279 to 523 (KPPG…SGHK). Residue 65–72 (GENGAGKS) coordinates ATP.

This sequence belongs to the ABC transporter superfamily. Carbohydrate importer 2 (CUT2) (TC 3.A.1.2) family.

The protein localises to the cell inner membrane. It carries out the reaction D-ribose(out) + ATP + H2O = D-ribose(in) + ADP + phosphate + H(+). The catalysed reaction is D-galactose(out) + ATP + H2O = D-galactose(in) + ADP + phosphate + H(+). Functionally, part of an ABC transporter complex involved in carbohydrate import. Could be involved in ribose, galactose and/or methyl galactoside import. Responsible for energy coupling to the transport system. In Pseudomonas savastanoi pv. phaseolicola (strain 1448A / Race 6) (Pseudomonas syringae pv. phaseolicola (strain 1448A / Race 6)), this protein is Putative ribose/galactose/methyl galactoside import ATP-binding protein.